The following is a 315-amino-acid chain: Acetyl-coenzyme A carboxylase carboxyl transferase subunit alpha (315 aa).

The region spanning 40 to 293 (LQDKSKTLTE…REELSSQLAM (254 aa)) is the CoA carboxyltransferase C-terminal domain.

It belongs to the AccA family. Acetyl-CoA carboxylase is a heterohexamer composed of biotin carboxyl carrier protein (AccB), biotin carboxylase (AccC) and two subunits each of ACCase subunit alpha (AccA) and ACCase subunit beta (AccD).

The protein resides in the cytoplasm. It carries out the reaction N(6)-carboxybiotinyl-L-lysyl-[protein] + acetyl-CoA = N(6)-biotinyl-L-lysyl-[protein] + malonyl-CoA. It functions in the pathway lipid metabolism; malonyl-CoA biosynthesis; malonyl-CoA from acetyl-CoA: step 1/1. Its function is as follows. Component of the acetyl coenzyme A carboxylase (ACC) complex. First, biotin carboxylase catalyzes the carboxylation of biotin on its carrier protein (BCCP) and then the CO(2) group is transferred by the carboxyltransferase to acetyl-CoA to form malonyl-CoA. In Pseudomonas savastanoi pv. phaseolicola (strain 1448A / Race 6) (Pseudomonas syringae pv. phaseolicola (strain 1448A / Race 6)), this protein is Acetyl-coenzyme A carboxylase carboxyl transferase subunit alpha.